A 196-amino-acid polypeptide reads, in one-letter code: N-(5'-phosphoribosyl)anthranilate isomerase (196 aa).

The protein belongs to the TrpF family.

It catalyses the reaction N-(5-phospho-beta-D-ribosyl)anthranilate = 1-(2-carboxyphenylamino)-1-deoxy-D-ribulose 5-phosphate. Its pathway is amino-acid biosynthesis; L-tryptophan biosynthesis; L-tryptophan from chorismate: step 3/5. The sequence is that of N-(5'-phosphoribosyl)anthranilate isomerase from Nitratiruptor sp. (strain SB155-2).